Here is a 328-residue protein sequence, read N- to C-terminus: Delta(3,5)-Delta(2,4)-dienoyl-CoA isomerase, mitochondrial (328 aa).

A mitochondrion-targeting transit peptide spans 1–26 (MAAGIVASRRLRDLLTRRLTASNYPG). Residues 116–120 (AGVDL) and glycine 174 each bind substrate. N6-succinyllysine is present on lysine 231. Serine 268 carries the phosphoserine modification. The Microbody targeting signal signature appears at 326–328 (SKL). N6-acetyllysine is present on lysine 327.

The protein belongs to the enoyl-CoA hydratase/isomerase family. As to quaternary structure, homohexamer.

It localises to the mitochondrion. Its subcellular location is the peroxisome. The enzyme catalyses (3E,5Z)-octadienoyl-CoA = (2E,4E)-octadienoyl-CoA. The catalysed reaction is (3E,5Z,8Z,11Z,14Z)-eicosapentaenoyl-CoA = (2E,4E,8Z,11Z,14Z)-eicosapentaenoyl-CoA. The protein operates within lipid metabolism; fatty acid beta-oxidation. Isomerization of 3-trans,5-cis-dienoyl-CoA to 2-trans,4-trans-dienoyl-CoA. This is Delta(3,5)-Delta(2,4)-dienoyl-CoA isomerase, mitochondrial (ECH1) from Pongo abelii (Sumatran orangutan).